The sequence spans 138 residues: Large ribosomal subunit protein bL17 (138 aa).

This sequence belongs to the bacterial ribosomal protein bL17 family. Part of the 50S ribosomal subunit. Contacts protein L32.

This Methylorubrum extorquens (strain CM4 / NCIMB 13688) (Methylobacterium extorquens) protein is Large ribosomal subunit protein bL17.